Reading from the N-terminus, the 553-residue chain is Urocanate hydratase (553 aa).

NAD(+)-binding positions include 45-46 (GG), Gln-123, 169-171 (GMG), Asp-189, Arg-194, 235-236 (NA), 256-260 (QTSAH), 266-267 (YV), Tyr-315, and Gly-485.

Belongs to the urocanase family. NAD(+) is required as a cofactor.

It is found in the cytoplasm. The enzyme catalyses 4-imidazolone-5-propanoate = trans-urocanate + H2O. It functions in the pathway amino-acid degradation; L-histidine degradation into L-glutamate; N-formimidoyl-L-glutamate from L-histidine: step 2/3. Catalyzes the conversion of urocanate to 4-imidazolone-5-propionate. This is Urocanate hydratase from Staphylococcus aureus (strain Mu50 / ATCC 700699).